The chain runs to 405 residues: Interferon alpha/beta receptor 1a (405 aa).

A signal peptide spans 1 to 20; sequence MKVGFALVLLWSLPITNVLA. Topologically, residues 21–233 are extracellular; the sequence is ELPQPQNLTL…QTEGDTPYGQ (213 aa). Fibronectin type-III domains follow at residues 22 to 123 and 126 to 228; these read LPQP…IDAS and PPSR…TEGD. 2 N-linked (GlcNAc...) asparagine glycosylation sites follow: Asn-27 and Asn-70. 2 cysteine pairs are disulfide-bonded: Cys-75/Cys-83 and Cys-201/Cys-222. Residue Asn-212 is glycosylated (N-linked (GlcNAc...) asparagine). A helical membrane pass occupies residues 234 to 254; sequence IFLYFLVSMMVCFLLVLLSSY. Over 255 to 405 the chain is Cytoplasmic; sequence AFFRFYRGLK…LDEGVVDICV (151 aa). Positions 325-374 are disordered; sequence TAPPSELEQDSGRRIRQDSGDSGIYSTEGGSAQQGRSGGEPIRRDQEVDS. The span at 334-343 shows a compositional bias: basic and acidic residues; that stretch reads DSGRRIRQDS. The segment covering 348-359 has biased composition (polar residues); the sequence is IYSTEGGSAQQG.

It belongs to the type II cytokine receptor family. In terms of assembly, heterodimer with IFNAR2; forming the receptor for type I interferon.

The protein localises to the cell membrane. Together with IFNAR2, forms the heterodimeric receptor for type I interferons (including interferons alpha, beta, epsilon, omega and kappa). Type I interferon binding activates the JAK-STAT signaling cascade, resulting in transcriptional activation or repression of interferon-regulated genes that encode the effectors of the interferon response. Mechanistically, type I interferon-binding brings the IFNAR1 and IFNAR2 subunits into close proximity with one another, driving their associated Janus kinases (JAKs) (TYK2 bound to IFNAR1 and JAK1 bound to IFNAR2) to cross-phosphorylate one another. The activated kinases phosphorylate specific tyrosine residues on the intracellular domains of IFNAR1 and IFNAR2, forming docking sites for the STAT transcription factors. STAT proteins are then phosphorylated by the JAKs, promoting their translocation into the nucleus to regulate expression of interferon-regulated genes. In Oncorhynchus mykiss (Rainbow trout), this protein is Interferon alpha/beta receptor 1a.